The chain runs to 91 residues: uncharacterized protein (91 aa).

Helical transmembrane passes span 10–30 (VLFT…AGGI) and 46–66 (LLVA…QALS). The tract at residues 68–91 (MRRQDGARGTARAGRNSARRRMPS) is disordered.

The protein resides in the cell membrane. This is an uncharacterized protein from Sinorhizobium fredii (strain NBRC 101917 / NGR234).